Consider the following 147-residue polypeptide: MAGSKSPKGLFAARKLRLKRLKFSWSQRSFKRRMLALKEKFDPLEGAPMARGIVLEKVGIESRQPNSAVRKAVRVQLVKNGRIVTAFVPGDGGVNFIDEHDEVVIAGIGGTLGRSMGDLPGVRYKVVMVNGVSLDALYKGKKQKPVR.

Belongs to the universal ribosomal protein uS12 family. Part of the 30S ribosomal subunit.

With S4 and S5 plays an important role in translational accuracy. Located at the interface of the 30S and 50S subunits. The protein is Small ribosomal subunit protein uS12 of Sulfolobus acidocaldarius (strain ATCC 33909 / DSM 639 / JCM 8929 / NBRC 15157 / NCIMB 11770).